Reading from the N-terminus, the 231-residue chain is MKKLSFLFLFLFFYILGSIPTGLVIGKLTQQKDLRNKGSGNIGATNAFRVLGKKWGILVFLLDFCKGFVPLTIFLHFSEFWPTEPSTQTFLQPHLTMKISLLAISPILGHMFSLFNKFKGGKAIATSVGIITSFNPLIGISGIIFFAIFLRLFGYASLSSIMASTLVNIFLWLNYLYCDNFGTLVPIQNQIQKPELFYFSINFATLIIIAKHYSNILRLIKGTENKFNFKK.

A run of 6 helical transmembrane segments spans residues 6-26 (FLFLFLFFYILGSIPTGLVIG), 55-75 (WGILVFLLDFCKGFVPLTIFL), 95-115 (LTMKISLLAISPILGHMFSLF), 130-150 (IITSFNPLIGISGIIFFAIFL), 152-172 (LFGYASLSSIMASTLVNIFLW), and 196-216 (LFYFSINFATLIIIAKHYSNI).

The protein belongs to the PlsY family. Probably interacts with PlsX.

It is found in the cell membrane. It catalyses the reaction an acyl phosphate + sn-glycerol 3-phosphate = a 1-acyl-sn-glycero-3-phosphate + phosphate. Its pathway is lipid metabolism; phospholipid metabolism. In terms of biological role, catalyzes the transfer of an acyl group from acyl-phosphate (acyl-PO(4)) to glycerol-3-phosphate (G3P) to form lysophosphatidic acid (LPA). This enzyme utilizes acyl-phosphate as fatty acyl donor, but not acyl-CoA or acyl-ACP. The polypeptide is Glycerol-3-phosphate acyltransferase (Aster yellows witches'-broom phytoplasma (strain AYWB)).